The primary structure comprises 612 residues: Indole-3-acetic acid-amido synthetase GH3.6 (612 aa).

This sequence belongs to the IAA-amido conjugating enzyme family. As to expression, expressed in cotyledons, stipules, true leaves, hypocotyls, and all parts of the roots. Not detected in flowers.

In terms of biological role, catalyzes the synthesis of indole-3-acetic acid (IAA)-amino acid conjugates, providing a mechanism for the plant to cope with the presence of excess auxin. Strongly reactive with Glu, Gln, Trp, Asp, Ala, Leu, Phe, Gly, Tyr, Met, Ile and Val. Little or no product formation with His, Ser, Thr, Arg, Lys, or Cys. Also active on pyruvic and butyric acid analogs of IAA, PAA and the synthetic auxin naphthaleneacetic acid (NAA). The two chlorinated synthetic auxin herbicides 2,4-D and 3,6-dichloro-o-anisic acid (dicamba) cannot be used as substrates. Involved in auxin signal transduction. Inhibits shoot and hypocotyl cell elongation, and lateral root cell differentiation in light. The sequence is that of Indole-3-acetic acid-amido synthetase GH3.6 (GH3.6) from Arabidopsis thaliana (Mouse-ear cress).